The following is a 75-amino-acid chain: Translation initiation factor IF-1 (75 aa).

The region spanning 1–75 is the S1-like domain; it reads MANLPKEQKL…SKGRIVYRFK (75 aa).

The protein belongs to the IF-1 family. In terms of assembly, component of the 30S ribosomal translation pre-initiation complex which assembles on the 30S ribosome in the order IF-2 and IF-3, IF-1 and N-formylmethionyl-tRNA(fMet); mRNA recruitment can occur at any time during PIC assembly.

The protein localises to the cytoplasm. One of the essential components for the initiation of protein synthesis. Stabilizes the binding of IF-2 and IF-3 on the 30S subunit to which N-formylmethionyl-tRNA(fMet) subsequently binds. Helps modulate mRNA selection, yielding the 30S pre-initiation complex (PIC). Upon addition of the 50S ribosomal subunit IF-1, IF-2 and IF-3 are released leaving the mature 70S translation initiation complex. The sequence is that of Translation initiation factor IF-1 from Mesomycoplasma hyopneumoniae (strain 232) (Mycoplasma hyopneumoniae).